Consider the following 546-residue polypeptide: Cytochrome P450 monooxygenase alnH (546 aa).

The chain crosses the membrane as a helical span at residues 11-31 (VPYSVPLLGSTVVILIGFIAI). N-linked (GlcNAc...) asparagine glycosylation is found at asparagine 146, asparagine 258, and asparagine 425. Cysteine 445 lines the heme pocket.

The protein belongs to the cytochrome P450 family. Heme serves as cofactor.

It localises to the membrane. It participates in polyketide biosynthesis. In terms of biological role, cytochrome P450 monooxygenase; part of the gene cluster that mediates the biosynthesis of asperlin, a polyketide showing anti-inflammatory, antitumor and antibiotic activities. The first step of the asperlin biosynthesis is the production of the intermediate 2,4,6-octatrienoic acid by the highly redusing polyketide synthase alnA with cleavage of the PKS product by the esterase alnB. 2,4,6-octatrienoic acid is further converted to asperlin via several steps involving the remaining enzymes from the cluster. This Emericella nidulans (strain FGSC A4 / ATCC 38163 / CBS 112.46 / NRRL 194 / M139) (Aspergillus nidulans) protein is Cytochrome P450 monooxygenase alnH.